A 147-amino-acid chain; its full sequence is Hemoglobin subunit beta-3 (147 aa).

The Globin domain maps to 3 to 147 (HWTAEEKAVI…LVDALSHSYH (145 aa)). Residues H64 and H93 each contribute to the heme b site.

Belongs to the globin family. As to quaternary structure, heterotetramer of two alpha chains and two beta chains. In terms of tissue distribution, red blood cells.

Functionally, this is a tadpole (larval) beta chain. The polypeptide is Hemoglobin subunit beta-3 (Aquarana catesbeiana (American bullfrog)).